The sequence spans 486 residues: Siroheme synthase (486 aa).

The tract at residues 1-204 (MNYLPIFVDL…HQIEQAEALV (204 aa)) is precorrin-2 dehydrogenase /sirohydrochlorin ferrochelatase. Residues 22 to 23 (HI) and 43 to 44 (EK) contribute to the NAD(+) site. S128 is subject to Phosphoserine. The interval 216–486 (GEVSLVGAGP…NKETHWKQAA (271 aa)) is uroporphyrinogen-III C-methyltransferase. P225 serves as a coordination point for S-adenosyl-L-methionine. Residue D248 is the Proton acceptor of the active site. The active-site Proton donor is the K270. Residues 301–303 (GGD), V306, 331–332 (TA), M383, and G412 contribute to the S-adenosyl-L-methionine site.

This sequence in the N-terminal section; belongs to the precorrin-2 dehydrogenase / sirohydrochlorin ferrochelatase family. It in the C-terminal section; belongs to the precorrin methyltransferase family.

It catalyses the reaction uroporphyrinogen III + 2 S-adenosyl-L-methionine = precorrin-2 + 2 S-adenosyl-L-homocysteine + H(+). It carries out the reaction precorrin-2 + NAD(+) = sirohydrochlorin + NADH + 2 H(+). The enzyme catalyses siroheme + 2 H(+) = sirohydrochlorin + Fe(2+). Its pathway is cofactor biosynthesis; adenosylcobalamin biosynthesis; precorrin-2 from uroporphyrinogen III: step 1/1. It participates in cofactor biosynthesis; adenosylcobalamin biosynthesis; sirohydrochlorin from precorrin-2: step 1/1. It functions in the pathway porphyrin-containing compound metabolism; siroheme biosynthesis; precorrin-2 from uroporphyrinogen III: step 1/1. The protein operates within porphyrin-containing compound metabolism; siroheme biosynthesis; siroheme from sirohydrochlorin: step 1/1. Its pathway is porphyrin-containing compound metabolism; siroheme biosynthesis; sirohydrochlorin from precorrin-2: step 1/1. In terms of biological role, multifunctional enzyme that catalyzes the SAM-dependent methylations of uroporphyrinogen III at position C-2 and C-7 to form precorrin-2 via precorrin-1. Then it catalyzes the NAD-dependent ring dehydrogenation of precorrin-2 to yield sirohydrochlorin. Finally, it catalyzes the ferrochelation of sirohydrochlorin to yield siroheme. In Actinobacillus pleuropneumoniae serotype 3 (strain JL03), this protein is Siroheme synthase.